The sequence spans 92 residues: MKVPGAALAVLLCTMSLCSQVFSPFGADTPIACCFSYVSKQIPRKFIVDCFETSSQCSKPGIIFETRKGRQACANPSEAWVQEYVADLKLKA.

The N-terminal stretch at 1-19 is a signal peptide; that stretch reads MKVPGAALAVLLCTMSLCS. Intrachain disulfides connect cysteine 33/cysteine 57 and cysteine 34/cysteine 73.

Belongs to the intercrine beta (chemokine CC) family. In terms of assembly, self-associates. Also heterodimer of MIP-1-alpha(4-69) and MIP-1-beta(3-69). Interacts with CCR1.

It localises to the secreted. Its function is as follows. Monokine with inflammatory and chemokinetic properties. Binds to CCR1, CCR4 and CCR5. One of the major HIV-suppressive factors produced by CD8+ T-cells. Recombinant MIP-1-alpha induces a dose-dependent inhibition of different strains of HIV-1, HIV-2, and simian immunodeficiency virus (SIV). The sequence is that of C-C motif chemokine 3 (CCL3) from Canis lupus familiaris (Dog).